Here is a 358-residue protein sequence, read N- to C-terminus: Protein-glutamate methylesterase/protein-glutamine glutaminase 2 (358 aa).

The Response regulatory domain occupies 7–124 (SVLLVDDSAV…KNFLIESAAE (118 aa)). The residue at position 58 (aspartate 58) is a 4-aspartylphosphate. Positions 170–358 (AQTTERIVAI…QEIHQAILHR (189 aa)) constitute a CheB-type methylesterase domain. Catalysis depends on residues serine 182, histidine 208, and aspartate 304.

The protein belongs to the CheB family. Post-translationally, phosphorylated by CheA. Phosphorylation of the N-terminal regulatory domain activates the methylesterase activity.

Its subcellular location is the cytoplasm. It catalyses the reaction [protein]-L-glutamate 5-O-methyl ester + H2O = L-glutamyl-[protein] + methanol + H(+). The catalysed reaction is L-glutaminyl-[protein] + H2O = L-glutamyl-[protein] + NH4(+). Its function is as follows. Involved in chemotaxis. Part of a chemotaxis signal transduction system that modulates chemotaxis in response to various stimuli. Catalyzes the demethylation of specific methylglutamate residues introduced into the chemoreceptors (methyl-accepting chemotaxis proteins or MCP) by CheR. Also mediates the irreversible deamidation of specific glutamine residues to glutamic acid. This Pseudomonas syringae pv. tomato (strain ATCC BAA-871 / DC3000) protein is Protein-glutamate methylesterase/protein-glutamine glutaminase 2.